Consider the following 283-residue polypeptide: MPHRKERPSGSSLNAHGSSGTAEGGNMSRLSLTRSPVSPLAAQGIPLPAQLTKANAPVHIDVGGHMYTSSLATLTKYPDSRISRLFNGTEPIVLDSLKQHYFIDRDGEIFRYILSFLRTSKLLLPDDFKDFNLLYEEARYYQLQPMVRELERWQQDQEQRRRSRACDCLVVRVTPDLGERIALSGEKALIEEVFPETGDVMCNSVNAGWNQDPTHVIRFPLNGYCRLNSVQVLERLFQRGFSVAASCGGGVDSSQFSEYVLCREERRPQPTPTAVRIKQEPLD.

Residues methionine 1–threonine 33 are disordered. Positions serine 9 to threonine 21 are enriched in polar residues. Phosphoserine occurs at positions 31, 35, and 38. One can recognise a BTB domain in the interval alanine 56 to aspartate 126.

In terms of assembly, forms oligomers, predominantly homopentamers. Interacts with KCTD1, probably forming heteropentamers depending on its abundance in a cell-type dependent manner. Interacts with TFAP2A; this interaction inhibits TFAP2A transcriptional activation. In terms of tissue distribution, expressed in the cerebral cortex, cerebellum, and hypothalamus (at protein level). Expressed in the arcuate hypothalamic nucleus, the ventromedial hypothalamic nucleus and the accumbens nucleus of the ventral striatum.

The protein localises to the nucleus. Functionally, during embryonic development, interferes with neural crest formation. Inhibits AP2 transcriptional activity by interaction with its activation domain. This chain is BTB/POZ domain-containing protein KCTD15 (Kctd15), found in Mus musculus (Mouse).